A 451-amino-acid chain; its full sequence is DNA polymerase delta subunit 3 (451 aa).

3 disordered regions span residues 187–241 (SQAK…AASS), 259–386 (KQTP…KVLR), and 404–451 (AWES…FAKK). Residues 200 to 216 (PSTSQVKEAPKASQTVE) show a composition bias toward polar residues. Positions 225-241 (SAPAKKGSSAPKSAASS) are enriched in low complexity. Over residues 306-316 (QREEELRRMME) the composition is skewed to basic and acidic residues. Over residues 329–353 (EEEEEEEEEEESEHEQLPAEEEPMA) the composition is skewed to acidic residues. Positions 354–366 (EEPKAPEPVKEEP) are enriched in basic and acidic residues. The segment covering 376–386 (GRRRGKRKVLR) has biased composition (basic residues). The short motif at 441–448 (QGSIMSWF) is the PIP-box element.

In terms of assembly, component of the DNA polymerase delta complex which consists of PolD1, PolD2, PolD3 and PolD4, with PolD1 bearing DNA polymerase and 3' to 5' proofreading exonuclease activities. Directly interacts with PCNA.

The protein localises to the nucleus. Functionally, accessory component of the DNA polymerase delta complex. The complex is required for the maintenance of genome integrity, acting in concert with the sliding clamp processivity factor PCNA. The polypeptide is DNA polymerase delta subunit 3 (Chaetomium thermophilum (strain DSM 1495 / CBS 144.50 / IMI 039719) (Thermochaetoides thermophila)).